The primary structure comprises 232 residues: 6-phosphogluconolactonase (232 aa).

This sequence belongs to the glucosamine/galactosamine-6-phosphate isomerase family. 6-phosphogluconolactonase subfamily.

It carries out the reaction 6-phospho-D-glucono-1,5-lactone + H2O = 6-phospho-D-gluconate + H(+). It functions in the pathway carbohydrate degradation; pentose phosphate pathway; D-ribulose 5-phosphate from D-glucose 6-phosphate (oxidative stage): step 2/3. Its function is as follows. Hydrolysis of 6-phosphogluconolactone to 6-phosphogluconate. This Haemophilus influenzae (strain ATCC 51907 / DSM 11121 / KW20 / Rd) protein is 6-phosphogluconolactonase (pgl).